Consider the following 120-residue polypeptide: Spermidine export protein MdtJ (120 aa).

Transmembrane regions (helical) follow at residues 1–21 (MFYWILLALAIVAEITGTLSM), 31–51 (AGYILMLVMITLSYIFLSFAV), 54–74 (IALGVAYALWEGIGILFITVF), and 81–101 (EVLSTMKIVGLLTLIVGIVLI).

The protein belongs to the drug/metabolite transporter (DMT) superfamily. Small multidrug resistance (SMR) (TC 2.A.7.1) family. MdtJ subfamily. Forms a complex with MdtI.

It localises to the cell inner membrane. Its function is as follows. Catalyzes the excretion of spermidine. The chain is Spermidine export protein MdtJ from Salmonella arizonae (strain ATCC BAA-731 / CDC346-86 / RSK2980).